The primary structure comprises 344 residues: Dihydroorotate dehydrogenase (quinone) (344 aa).

FMN is bound by residues 65-69 and Thr89; that span reads AGFDK. Lys69 is a binding site for substrate. Substrate is bound at residue 114–118; the sequence is NRMGF. The FMN site is built by Asn145 and Asn178. Position 178 (Asn178) interacts with substrate. Ser181 acts as the Nucleophile in catalysis. Asn183 is a substrate binding site. Lys215 and Thr243 together coordinate FMN. 244 to 245 is a substrate binding site; sequence NT. Residues Gly269, Gly298, and 319 to 320 contribute to the FMN site; that span reads YT.

This sequence belongs to the dihydroorotate dehydrogenase family. Type 2 subfamily. Monomer. The cofactor is FMN.

Its subcellular location is the cell membrane. It catalyses the reaction (S)-dihydroorotate + a quinone = orotate + a quinol. It functions in the pathway pyrimidine metabolism; UMP biosynthesis via de novo pathway; orotate from (S)-dihydroorotate (quinone route): step 1/1. Its function is as follows. Catalyzes the conversion of dihydroorotate to orotate with quinone as electron acceptor. This is Dihydroorotate dehydrogenase (quinone) from Clavibacter sepedonicus (Clavibacter michiganensis subsp. sepedonicus).